The following is an 839-amino-acid chain: Autophagy-related protein 9A (839 aa).

Ala-2 bears the N-acetylalanine mark. The Cytoplasmic portion of the chain corresponds to 2–61 (AQFDTEYQRLEASYSDSPPGEEDLLVHVAEGSKSPWHHIENLDLFFSRVYNLHQKNGFTC). Positions 8–11 (YQRL) match the Tyrosine-based sorting signal motif. Residues Ser-14, Ser-16, and Ser-18 each carry the phosphoserine modification. Residues 62–84 (MLIGEIFELMQFLFVVAFTTFLV) form a helical membrane-spanning segment. Over 85 to 128 (SCVDYDILFANKMVNHSLHPTEPVKVTLPDAFLPAQVCSARIQE) the chain is Lumenal. Asn-99 carries N-linked (GlcNAc...) asparagine glycosylation. The helical transmembrane segment at 129 to 154 (NGSLITILVIAGVFWIHRLIKFIYNI) threads the bilayer. Topologically, residues 155–290 (CCYWEIHSFY…ELAQRLSNRI (136 aa)) are cytoplasmic. An intramembrane segment occupies 291 to 301 (LWIGIANFLLC). Residues 302–319 (PLILIWQILYAFFSYAEV) are Cytoplasmic-facing. An intramembrane segment occupies 320–328 (LKREPGALG). Residues 329 to 371 (ARCWSLYGRCYLRHFNELEHELQSRLNRGYKPASKYMNCFLSP) are Cytoplasmic-facing. A helical membrane pass occupies residues 372-397 (LLTLLAKNGAFFAGSILAVLIALTIY). Residues 398–406 (DEDVLAVEH) are Lumenal-facing. A helical membrane pass occupies residues 407–424 (VLTTVTLLGVTVTVCRSF). Residues 425–470 (IPDQHMVFCPEQLLRVILAHIHYMPDHWQGNAHRSQTRDEFAQLFQ) are Cytoplasmic-facing. An intramembrane segment occupies 471–480 (YKAVFILEEL). The Cytoplasmic portion of the chain corresponds to 481–483 (LSP). An intramembrane segment occupies 484–492 (IVTPLILIF). The Cytoplasmic portion of the chain corresponds to 493-839 (CLRPRALEII…DELPPQVHKV (347 aa)). Phosphoserine is present on residues Ser-656, Ser-735, Ser-738, Ser-741, and Ser-828. 2 disordered regions span residues 656-689 (SPLQ…SSVW) and 717-839 (HKQQ…VHKV). A compositionally biased stretch (basic and acidic residues) spans 724–736 (EPERHVWHRRESD). Acidic residues-rich tracts occupy residues 737-747 (ESGESAPEEGG) and 823-832 (VPEEGSEDEL).

It belongs to the ATG9 family. As to quaternary structure, homotrimer; forms a homotrimer with a central pore that forms a path between the two membrane leaflets. Interacts (via cytoplasmic its C-terminus) with ATG2A. Interacts with SUPT20H. Interacts (via the tyrosine-based sorting signal motif) with AP4M1; promoting association with the AP-4 complex. Interacts with ARFIP1 and ARFIP2. Interacts with PI4K2A and PI4KB. Interacts with ATG4A; the interaction is direct and promotes ATG9A trafficking. In terms of processing, ufmylated in a DDRGK1 dependent manner.

It is found in the preautophagosomal structure membrane. It localises to the cytoplasmic vesicle. The protein localises to the autophagosome membrane. Its subcellular location is the golgi apparatus. The protein resides in the trans-Golgi network membrane. It is found in the late endosome membrane. It localises to the recycling endosome membrane. The protein localises to the endoplasmic reticulum membrane. Its subcellular location is the mitochondrion membrane. The enzyme catalyses a 1,2-diacyl-sn-glycero-3-phosphocholine(in) = a 1,2-diacyl-sn-glycero-3-phosphocholine(out). The catalysed reaction is a 1,2-diacyl-sn-glycero-3-phospho-L-serine(in) = a 1,2-diacyl-sn-glycero-3-phospho-L-serine(out). It catalyses the reaction a 1,2-diacyl-sn-glycero-3-phosphoethanolamine(in) = a 1,2-diacyl-sn-glycero-3-phosphoethanolamine(out). Phospholipid scramblase involved in autophagy by mediating autophagosomal membrane expansion. Cycles between the preautophagosomal structure/phagophore assembly site (PAS) and the cytoplasmic vesicle pool and supplies membrane for the growing autophagosome. Lipid scramblase activity plays a key role in preautophagosomal structure/phagophore assembly by distributing the phospholipids that arrive through ATG2 (ATG2A or ATG2B) from the cytoplasmic to the luminal leaflet of the bilayer, thereby driving autophagosomal membrane expansion. Also required to supply phosphatidylinositol 4-phosphate to the autophagosome initiation site by recruiting the phosphatidylinositol 4-kinase beta (PI4KB) in a process dependent on ARFIP2, but not ARFIP1. In addition to autophagy, also plays a role in necrotic cell death. This is Autophagy-related protein 9A from Rattus norvegicus (Rat).